An 86-amino-acid polypeptide reads, in one-letter code: Small ribosomal subunit protein bS20 (86 aa).

Residues 1 to 27 (MANIKSAKKRAVQSEKRRQHNASRRSM) show a composition bias toward basic residues. The interval 1–28 (MANIKSAKKRAVQSEKRRQHNASRRSMM) is disordered.

It belongs to the bacterial ribosomal protein bS20 family.

In terms of biological role, binds directly to 16S ribosomal RNA. The chain is Small ribosomal subunit protein bS20 from Proteus mirabilis (strain HI4320).